The chain runs to 66 residues: Large ribosomal subunit protein bL35 (66 aa).

The span at 1-26 shows a compositional bias: basic residues; it reads MPKMKTHRGAAKRVKRTGSGKLKRSR. Residues 1 to 49 are disordered; it reads MPKMKTHRGAAKRVKRTGSGKLKRSRAFTSHLFANKSTKQKRKLRKASL.

This sequence belongs to the bacterial ribosomal protein bL35 family.

The polypeptide is Large ribosomal subunit protein bL35 (Staphylococcus saprophyticus subsp. saprophyticus (strain ATCC 15305 / DSM 20229 / NCIMB 8711 / NCTC 7292 / S-41)).